The primary structure comprises 706 residues: Elongation factor G (706 aa).

The tr-type G domain occupies 15–291; the sequence is LKTRNIGISA…GVLDYLASPV (277 aa). Residues 24-31, 91-95, and 145-148 each bind GTP; these read AHIDSGKT, DTPGH, and NKLD.

It belongs to the TRAFAC class translation factor GTPase superfamily. Classic translation factor GTPase family. EF-G/EF-2 subfamily.

The protein localises to the cytoplasm. In terms of biological role, catalyzes the GTP-dependent ribosomal translocation step during translation elongation. During this step, the ribosome changes from the pre-translocational (PRE) to the post-translocational (POST) state as the newly formed A-site-bound peptidyl-tRNA and P-site-bound deacylated tRNA move to the P and E sites, respectively. Catalyzes the coordinated movement of the two tRNA molecules, the mRNA and conformational changes in the ribosome. The sequence is that of Elongation factor G from Leptospira borgpetersenii serovar Hardjo-bovis (strain JB197).